A 143-amino-acid chain; its full sequence is 3-dehydroquinate dehydratase (143 aa).

Tyr-22 acts as the Proton acceptor in catalysis. Positions 73, 79, and 86 each coordinate substrate. His-99 serves as the catalytic Proton donor. Substrate contacts are provided by residues Ile-100–Ser-101 and Arg-110.

It belongs to the type-II 3-dehydroquinase family. Homododecamer.

It catalyses the reaction 3-dehydroquinate = 3-dehydroshikimate + H2O. The protein operates within metabolic intermediate biosynthesis; chorismate biosynthesis; chorismate from D-erythrose 4-phosphate and phosphoenolpyruvate: step 3/7. Catalyzes a trans-dehydration via an enolate intermediate. The protein is 3-dehydroquinate dehydratase of Mycolicibacterium paratuberculosis (strain ATCC BAA-968 / K-10) (Mycobacterium paratuberculosis).